Here is a 199-residue protein sequence, read N- to C-terminus: Ribonuclease HII (199 aa).

Residues 13–199 form the RNase H type-2 domain; that stretch reads GLVAGVDEVG…FAPIAKILCG (187 aa). Residues aspartate 19, glutamate 20, and aspartate 110 each coordinate a divalent metal cation.

Belongs to the RNase HII family. It depends on Mn(2+) as a cofactor. Requires Mg(2+) as cofactor.

Its subcellular location is the cytoplasm. It carries out the reaction Endonucleolytic cleavage to 5'-phosphomonoester.. Endonuclease that specifically degrades the RNA of RNA-DNA hybrids. This chain is Ribonuclease HII, found in Jannaschia sp. (strain CCS1).